The chain runs to 329 residues: MAQSTLYSRVLGTGSYLPPDRVTNQQLTDRLAKEGIETSDEWIVARTGIHARHFAAPDVTTSDLALEASRRAIEAAGIDPQSIDLIIVATSTPDFVFPSTACLLQNKLGIKNGGAAFDVQAVCSGFAYAMATADSFIRSGQHRTALVIGAETFSRILDFKDRTTCVLFGDGAGAVILSASEEPGVLGSALHADGSYSHILCTPGNVNRGVIEGSAFLYMDGQAVFKLAVNVLEKVAIEALAKANLAPEQIDWLIPHQANIRIMTSTCRKLGLPQERMVVTVDQHGNTSAASIPLAFDTAVRDGRIQRGQHVLIEGVGGGFTWGASVFRY.

Catalysis depends on residues Cys123 and His256. The ACP-binding stretch occupies residues 257–261 (QANIR). Residue Asn286 is part of the active site.

It belongs to the thiolase-like superfamily. FabH family. Homodimer.

Its subcellular location is the cytoplasm. It catalyses the reaction malonyl-[ACP] + acetyl-CoA + H(+) = 3-oxobutanoyl-[ACP] + CO2 + CoA. It participates in lipid metabolism; fatty acid biosynthesis. Catalyzes the condensation reaction of fatty acid synthesis by the addition to an acyl acceptor of two carbons from malonyl-ACP. Catalyzes the first condensation reaction which initiates fatty acid synthesis and may therefore play a role in governing the total rate of fatty acid production. Possesses both acetoacetyl-ACP synthase and acetyl transacylase activities. Its substrate specificity determines the biosynthesis of branched-chain and/or straight-chain of fatty acids. The chain is Beta-ketoacyl-[acyl-carrier-protein] synthase III from Burkholderia lata (strain ATCC 17760 / DSM 23089 / LMG 22485 / NCIMB 9086 / R18194 / 383).